The following is a 612-amino-acid chain: Dihydroxy-acid dehydratase (612 aa).

Asp-81 provides a ligand contact to Mg(2+). Residue Cys-122 coordinates [2Fe-2S] cluster. Asp-123 and Lys-124 together coordinate Mg(2+). Lys-124 bears the N6-carboxylysine mark. Position 195 (Cys-195) interacts with [2Fe-2S] cluster. Position 491 (Glu-491) interacts with Mg(2+). The Proton acceptor role is filled by Ser-517.

Belongs to the IlvD/Edd family. Homodimer. The cofactor is [2Fe-2S] cluster. It depends on Mg(2+) as a cofactor.

It carries out the reaction (2R)-2,3-dihydroxy-3-methylbutanoate = 3-methyl-2-oxobutanoate + H2O. The enzyme catalyses (2R,3R)-2,3-dihydroxy-3-methylpentanoate = (S)-3-methyl-2-oxopentanoate + H2O. The protein operates within amino-acid biosynthesis; L-isoleucine biosynthesis; L-isoleucine from 2-oxobutanoate: step 3/4. It functions in the pathway amino-acid biosynthesis; L-valine biosynthesis; L-valine from pyruvate: step 3/4. In terms of biological role, functions in the biosynthesis of branched-chain amino acids. Catalyzes the dehydration of (2R,3R)-2,3-dihydroxy-3-methylpentanoate (2,3-dihydroxy-3-methylvalerate) into 2-oxo-3-methylpentanoate (2-oxo-3-methylvalerate) and of (2R)-2,3-dihydroxy-3-methylbutanoate (2,3-dihydroxyisovalerate) into 2-oxo-3-methylbutanoate (2-oxoisovalerate), the penultimate precursor to L-isoleucine and L-valine, respectively. The polypeptide is Dihydroxy-acid dehydratase (Bartonella henselae (strain ATCC 49882 / DSM 28221 / CCUG 30454 / Houston 1) (Rochalimaea henselae)).